The chain runs to 179 residues: Large ribosomal subunit protein uL6 (179 aa).

Belongs to the universal ribosomal protein uL6 family. Part of the 50S ribosomal subunit.

Its function is as follows. This protein binds to the 23S rRNA, and is important in its secondary structure. It is located near the subunit interface in the base of the L7/L12 stalk, and near the tRNA binding site of the peptidyltransferase center. The protein is Large ribosomal subunit protein uL6 of Chlorobaculum tepidum (strain ATCC 49652 / DSM 12025 / NBRC 103806 / TLS) (Chlorobium tepidum).